Consider the following 171-residue polypeptide: Large ribosomal subunit protein uL24 (171 aa).

Positions 1-124 (MNIKTGDTVV…AKPAKTKAEK (124 aa)) are large ribosomal subunit protein uL24. Positions 108-171 (GQTLDKAAKP…SVQKKGASGK (64 aa)) are disordered. Residues 125–171 (VEKAATSSTDKPAKVTKAAKEAKPVKAVKSQKVEKNTSVQKKGASGK) are unknown.

It belongs to the universal ribosomal protein uL24 family. Part of the 50S ribosomal subunit.

Its function is as follows. One of two assembly initiator proteins, it binds directly to the 5'-end of the 23S rRNA, where it nucleates assembly of the 50S subunit. Functionally, one of the proteins that surrounds the polypeptide exit tunnel on the outside of the subunit. The polypeptide is Large ribosomal subunit protein uL24 (Acholeplasma laidlawii (strain PG-8A)).